The primary structure comprises 525 residues: GMP synthase [glutamine-hydrolyzing] (525 aa).

Residues 16-205 (PVLVVDFGAQ…LHDFAGLGAQ (190 aa)) form the Glutamine amidotransferase type-1 domain. The active-site Nucleophile is the Cys93. Residues His179 and Glu181 contribute to the active site. Residues 206-399 (WTPANIANAL…LGLPEEIVAR (194 aa)) form the GMPS ATP-PPase domain. 233–239 (SGGVDSA) contributes to the ATP binding site.

Homodimer.

It catalyses the reaction XMP + L-glutamine + ATP + H2O = GMP + L-glutamate + AMP + diphosphate + 2 H(+). It functions in the pathway purine metabolism; GMP biosynthesis; GMP from XMP (L-Gln route): step 1/1. Catalyzes the synthesis of GMP from XMP. This chain is GMP synthase [glutamine-hydrolyzing], found in Mycobacterium bovis (strain BCG / Pasteur 1173P2).